The primary structure comprises 912 residues: Translation initiation factor IF-2 (912 aa).

Residues S26–R297 form a disordered region. Positions K56–K74 are enriched in low complexity. The span at A100 to A120 shows a compositional bias: pro residues. Residues A121 to P131 show a composition bias toward low complexity. Pro residues-rich tracts occupy residues A132–P152, P173–P183, and N192–G218. Positions P219–G283 are enriched in gly residues. Basic residues predominate over residues K287 to K296. Positions T408–L579 constitute a tr-type G domain. Residues G417 to T424 are G1. G417 to T424 contacts GTP. Residues G442–H446 are G2. Residues D467–G470 form a G3 region. GTP-binding positions include D467 to H471 and N521 to D524. The segment at N521 to D524 is G4. Residues S557–R559 are G5.

It belongs to the TRAFAC class translation factor GTPase superfamily. Classic translation factor GTPase family. IF-2 subfamily.

The protein resides in the cytoplasm. One of the essential components for the initiation of protein synthesis. Protects formylmethionyl-tRNA from spontaneous hydrolysis and promotes its binding to the 30S ribosomal subunits. Also involved in the hydrolysis of GTP during the formation of the 70S ribosomal complex. In Mycobacteroides abscessus (strain ATCC 19977 / DSM 44196 / CCUG 20993 / CIP 104536 / JCM 13569 / NCTC 13031 / TMC 1543 / L948) (Mycobacterium abscessus), this protein is Translation initiation factor IF-2.